The following is a 259-amino-acid chain: MSFVVVIPARYASTRLPGKPLADIHGKPMVQHVVEKALQSGADRVIVATDDERVHSALASFAEQAGVEVCMTSQDHQSGTERLAEVCRHYGFSADTIVVNVQGDEPLIPPAIIRQVADNLAAASAPMATLSVPIQDAEEAFNPNAVKVVTDKEGYALYFSRACIPWDRDRFAASDRAAGSHEQIGDHYQRHIGIYAYRAGFIQRYVDWAPSVLEQVEALEQLRVLWYGEKIHVAQALQAPPVGVDTQADLDKVRALLAN.

The protein belongs to the KdsB family.

The protein localises to the cytoplasm. It carries out the reaction 3-deoxy-alpha-D-manno-oct-2-ulosonate + CTP = CMP-3-deoxy-beta-D-manno-octulosonate + diphosphate. The protein operates within nucleotide-sugar biosynthesis; CMP-3-deoxy-D-manno-octulosonate biosynthesis; CMP-3-deoxy-D-manno-octulosonate from 3-deoxy-D-manno-octulosonate and CTP: step 1/1. It functions in the pathway bacterial outer membrane biogenesis; lipopolysaccharide biosynthesis. Activates KDO (a required 8-carbon sugar) for incorporation into bacterial lipopolysaccharide in Gram-negative bacteria. This Aeromonas salmonicida (strain A449) protein is 3-deoxy-manno-octulosonate cytidylyltransferase.